The primary structure comprises 172 residues: Large ribosomal subunit protein uL10 (172 aa).

It belongs to the universal ribosomal protein uL10 family. As to quaternary structure, part of the ribosomal stalk of the 50S ribosomal subunit. The N-terminus interacts with L11 and the large rRNA to form the base of the stalk. The C-terminus forms an elongated spine to which 3 L12 dimers bind in a sequential fashion forming a heptameric L10(L12)2(L12)2(L12)2 complex.

Functionally, forms part of the ribosomal stalk, playing a central role in the interaction of the ribosome with GTP-bound translation factors. The protein is Large ribosomal subunit protein uL10 of Agrobacterium fabrum (strain C58 / ATCC 33970) (Agrobacterium tumefaciens (strain C58)).